Here is a 90-residue protein sequence, read N- to C-terminus: Phosphocarrier protein NPr (90 aa).

The HPr domain occupies 2–90; sequence TVKQTVEITN…ALFNSGFDED (89 aa). Residue His-16 is the Pros-phosphohistidine intermediate of the active site.

Belongs to the HPr family.

It is found in the cytoplasm. In terms of biological role, component of the phosphoenolpyruvate-dependent nitrogen-metabolic phosphotransferase system (nitrogen-metabolic PTS), that seems to be involved in regulating nitrogen metabolism. The phosphoryl group from phosphoenolpyruvate (PEP) is transferred to the phosphoryl carrier protein NPr by enzyme I-Ntr. Phospho-NPr then transfers it to EIIA-Ntr. Could function in the transcriptional regulation of sigma-54 dependent operons in conjunction with the NPr (PtsO) and EIIA-Ntr (PtsN) proteins. The polypeptide is Phosphocarrier protein NPr (ptsO) (Escherichia coli O157:H7).